The primary structure comprises 143 residues: Small ribosomal subunit protein bS18 (143 aa).

The tract at residues 1–72 is disordered; that stretch reads MARPDMGGPK…RGGEEGGRRG (72 aa). Residues 10-50 show a composition bias toward gly residues; it reads KSSGGFGGPRSGGGFGGGGYGGGGGGGGGYGGGGGGGFGGR. Over residues 51–70 the composition is skewed to basic and acidic residues; it reads GGDRGDRGDRDDRGGEEGGR.

Belongs to the bacterial ribosomal protein bS18 family. As to quaternary structure, part of the 30S ribosomal subunit. Forms a tight heterodimer with protein bS6.

In terms of biological role, binds as a heterodimer with protein bS6 to the central domain of the 16S rRNA, where it helps stabilize the platform of the 30S subunit. The sequence is that of Small ribosomal subunit protein bS18 from Anaeromyxobacter sp. (strain Fw109-5).